Reading from the N-terminus, the 637-residue chain is Phosphomethylpyrimidine synthase (637 aa).

Residues asparagine 242, methionine 271, tyrosine 300, histidine 336, 356–358, 397–400, and glutamate 436 each bind substrate; these read SRG and DGLR. Histidine 440 serves as a coordination point for Zn(2+). Tyrosine 463 is a substrate binding site. Residue histidine 504 coordinates Zn(2+). [4Fe-4S] cluster-binding residues include cysteine 584, cysteine 587, and cysteine 592.

This sequence belongs to the ThiC family. As to quaternary structure, homodimer. Requires [4Fe-4S] cluster as cofactor.

It carries out the reaction 5-amino-1-(5-phospho-beta-D-ribosyl)imidazole + S-adenosyl-L-methionine = 4-amino-2-methyl-5-(phosphooxymethyl)pyrimidine + CO + 5'-deoxyadenosine + formate + L-methionine + 3 H(+). The protein operates within cofactor biosynthesis; thiamine diphosphate biosynthesis. Catalyzes the synthesis of the hydroxymethylpyrimidine phosphate (HMP-P) moiety of thiamine from aminoimidazole ribotide (AIR) in a radical S-adenosyl-L-methionine (SAM)-dependent reaction. This chain is Phosphomethylpyrimidine synthase, found in Bordetella pertussis (strain Tohama I / ATCC BAA-589 / NCTC 13251).